The sequence spans 726 residues: Probable cadmium-transporting ATPase (726 aa).

Residues 11–74 form the HMA domain; that stretch reads DKQVYRVEGF…AGAFENLKVF (64 aa). The Cd(2+) site is built by C22 and C25. Helical transmembrane passes span 105–125, 129–149, 163–179, 335–355, and 363–383; these read STLL…FVNG, LVTS…LFKV, TLMT…GEWA, IIMV…GGSW, and LAVL…ISIV. D414 serves as the catalytic 4-aspartylphosphate intermediate. Transmembrane regions (helical) follow at residues 671–693 and 698–720; these read LNII…LLVI and TLWI…SLRL.

Belongs to the cation transport ATPase (P-type) (TC 3.A.3) family. Type IB subfamily.

The protein localises to the cell membrane. It catalyses the reaction Cd(2+)(in) + ATP + H2O = Cd(2+)(out) + ADP + phosphate + H(+). In terms of biological role, couples the hydrolysis of ATP with the export of cadmium. The polypeptide is Probable cadmium-transporting ATPase (cadA) (Staphylococcus aureus (strain MRSA252)).